The chain runs to 101 residues: Apolipoprotein C-III (101 aa).

The N-terminal stretch at 1-20 (MQPRMLLIVALVALLASARA) is a signal peptide. At Met-64 the chain carries Methionine sulfoxide. The tract at residues 69–101 (KSLKGYWSKFTDKFTGLWESGPEDQLTTPTLEP) is lipid-binding. A glycan (O-linked (GalNAc...) threonine) is linked at Thr-96.

This sequence belongs to the apolipoprotein C3 family. The most abundant glycoforms are characterized by an O-linked disaccharide galactose linked to N-acetylgalactosamine (Gal-GalNAc), further modified with up to 3 sialic acid residues. Less abundant glycoforms are characterized by more complex and fucosylated glycan moieties. O-glycosylated on Thr-96 with a core 1 or possibly core 8 glycan. Synthesized predominantly in liver and to a lesser degree in intestine.

Its subcellular location is the secreted. Functionally, component of triglyceride-rich very low density lipoproteins (VLDL) and high density lipoproteins (HDL) in plasma. Plays a multifaceted role in triglyceride homeostasis. Intracellularly, promotes hepatic very low density lipoprotein 1 (VLDL1) assembly and secretion; extracellularly, attenuates hydrolysis and clearance of triglyceride-rich lipoproteins (TRLs). Impairs the lipolysis of TRLs by inhibiting lipoprotein lipase and the hepatic uptake of TRLs by remnant receptors. Formed of several curved helices connected via semiflexible hinges, so that it can wrap tightly around the curved micelle surface and easily adapt to the different diameters of its natural binding partners. The chain is Apolipoprotein C-III (Apoc3) from Rattus norvegicus (Rat).